The sequence spans 155 residues: Ribonuclease H (155 aa).

An RNase H type-1 domain is found at Leu5–Gln146. Residues Asp14, Glu52, Asp74, and Asp138 each coordinate Mg(2+).

It belongs to the RNase H family. Monomer. Mg(2+) is required as a cofactor.

It is found in the cytoplasm. It carries out the reaction Endonucleolytic cleavage to 5'-phosphomonoester.. Functionally, endonuclease that specifically degrades the RNA of RNA-DNA hybrids. The chain is Ribonuclease H from Nitrosospira multiformis (strain ATCC 25196 / NCIMB 11849 / C 71).